The sequence spans 93 residues: MISSNYSYPLDPSWNTEDITKVLRFLNQVEHAYENSVKVDDLLDSYKEFKKVVKSKAQEKQIDREFQRTSGYSTYQAVKAAQQQAKGFISLGR.

The protein belongs to the UPF0223 family.

In Streptococcus agalactiae serotype III (strain NEM316), this protein is UPF0223 protein gbs1030.